The sequence spans 380 residues: Erythronate-4-phosphate dehydrogenase (380 aa).

Substrate contacts are provided by serine 45 and threonine 66. An NAD(+)-binding site is contributed by aspartate 146. Arginine 207 is a catalytic residue. Aspartate 232 contacts NAD(+). Glutamate 237 is an active-site residue. The Proton donor role is filled by histidine 254. Glycine 257 is a binding site for NAD(+). Residue tyrosine 258 coordinates substrate.

This sequence belongs to the D-isomer specific 2-hydroxyacid dehydrogenase family. PdxB subfamily. In terms of assembly, homodimer.

Its subcellular location is the cytoplasm. It carries out the reaction 4-phospho-D-erythronate + NAD(+) = (R)-3-hydroxy-2-oxo-4-phosphooxybutanoate + NADH + H(+). It functions in the pathway cofactor biosynthesis; pyridoxine 5'-phosphate biosynthesis; pyridoxine 5'-phosphate from D-erythrose 4-phosphate: step 2/5. Catalyzes the oxidation of erythronate-4-phosphate to 3-hydroxy-2-oxo-4-phosphonooxybutanoate. The sequence is that of Erythronate-4-phosphate dehydrogenase from Marinomonas sp. (strain MWYL1).